Reading from the N-terminus, the 477-residue chain is Asparaginyl-tRNA synthetase (477 aa).

Residues 1–14 (MLGARRLLGALRLC) constitute a mitochondrion transit peptide. Lysine 353 carries the post-translational modification N6-acetyllysine.

This sequence belongs to the class-II aminoacyl-tRNA synthetase family. As to quaternary structure, homodimer. Expressed in brain and inner ear, including the cochlear epithelium and organ of Corti.

Its subcellular location is the mitochondrion matrix. It localises to the mitochondrion. It carries out the reaction tRNA(Asn) + L-asparagine + ATP = L-asparaginyl-tRNA(Asn) + AMP + diphosphate + H(+). In terms of biological role, mitochondrial aminoacyl-tRNA synthetase that catalyzes the specific attachment of the asparagine amino acid (aa) to the homologous transfer RNA (tRNA), further participating in protein synthesis. The reaction occurs in a two steps: asparagine is first activated by ATP to form Asn-AMP and then transferred to the acceptor end of tRNA(Asn). This is Asparaginyl-tRNA synthetase from Mus musculus (Mouse).